The chain runs to 189 residues: Calcium and integrin-binding family member 2 (189 aa).

EF-hand domains lie at 68-103 (RENPFRRRICEAFSRDGQGNLSFEDFLDALSVFSEQ), 105-140 (PRDIKVFYAFKIYDFDQDGFIGHADLMSCLTTMTKN), and 146-181 (EHQQIADKVIEEADVDGDGKLSILEFEHVILRAPDF). Ca(2+)-binding residues include D118, D120, D122, D129, D159, D161, D163, K165, and E170.

In terms of assembly, monomer. Homodimer.

The protein resides in the cytoplasm. Its function is as follows. Calcium- and integrin-binding protein. Plays a role in intracellular calcium homeostasis. Critical for proper photoreceptor cell maintenance and function. Required for prevention of light-dependent retinal degeneration. This chain is Calcium and integrin-binding family member 2, found in Drosophila melanogaster (Fruit fly).